Reading from the N-terminus, the 699-residue chain is MAREYKIEDYRNFGIMAHIDAGKTTTTERILYYTGKSHKIGEVHDGAATMDWMEQEQERGITITSAATTTFWKGRDGKSRRFNIIDTPGHVDFTIEVERSLRVLDGAIALLDANAGVEPQTETVWRQAEKYNVPRMIFCNKMDKTGADFYRSVEMIKTRLGATAVVMQLPIGAESDFKGVVDLIEMNALIWRDESLGAQWDVVEIPDDLKEKAEEYREKLIETVVEIDEAAMEAYLEGQYPDNEQIRALVRRGTIDVKFHPMFCGTAFKNKGVQPLLDAVVDYLPSPVDIPAIKGIDVKTEAEIERHASDEEPLSMLAFKIMNDPFVGSLTFARIYSGKLEKGTSVMNTVKEKRERVGRMLQMHSNSREDIEEAFAGDIVALAGLKETTTGDTLCDPLKQVILERMEFPEPVIQIAIEPKTKGDQEKMGLALNRLAAEDPSFRVKTDEESGQTIIAGMGELHLDILVDRMRREFKVEATVGAPQVAYRETITRQHEEDYTHKKQSGGTGQFARVKIVFEPNPEGEEFKFESKIVGGAVPKEYIPGVQKGIESVLSSGPLAGFPMLGVKATLIDGAFHDVDSSVLAFEIASRACFREAAKKAGAQLLEPIMKVEVVTPEDYVGDVIGDLNSRRGQIQGQEARGVAVVINAHVPLANMFKYVDNLRSMSQGRAQYTMLFDHYAPVPSNVAQEIQAKYSGQK.

Residues 8 to 288 (EDYRNFGIMA…AVVDYLPSPV (281 aa)) enclose the tr-type G domain. Residues 17–24 (AHIDAGKT), 86–90 (DTPGH), and 140–143 (NKMD) contribute to the GTP site.

This sequence belongs to the TRAFAC class translation factor GTPase superfamily. Classic translation factor GTPase family. EF-G/EF-2 subfamily.

It is found in the cytoplasm. Functionally, catalyzes the GTP-dependent ribosomal translocation step during translation elongation. During this step, the ribosome changes from the pre-translocational (PRE) to the post-translocational (POST) state as the newly formed A-site-bound peptidyl-tRNA and P-site-bound deacylated tRNA move to the P and E sites, respectively. Catalyzes the coordinated movement of the two tRNA molecules, the mRNA and conformational changes in the ribosome. In Sinorhizobium medicae (strain WSM419) (Ensifer medicae), this protein is Elongation factor G.